Reading from the N-terminus, the 131-residue chain is EG45-like domain containing protein (131 aa).

Positions 1-24 are cleaved as a signal peptide; the sequence is MGVGTKVLVITTMAICLISSAAYA. The Expansin-like EG45; incomplete domain occupies 27-131; sequence GTATFYTPPY…GKIKIEFNQA (105 aa). Cys73 and Cys85 form a disulfide bridge.

In terms of tissue distribution, expressed in the outer layer of xylem and the vascular cambial zone of roots, in shoot cambium, but not in leaves.

The protein localises to the secreted. In terms of biological role, might have a systemic role in water and solute homeostasis. Has no expansin-like activity. The chain is EG45-like domain containing protein (CjBAp12) from Citrus jambhiri (Rough lemon).